We begin with the raw amino-acid sequence, 363 residues long: Cytochrome c oxidase subunit 2 (363 aa).

The tract at residues 1 to 23 is disordered; it reads MTPRGPGRLQRLSQCRPQRGSGG. The first 41 residues, 1-41, serve as a signal peptide directing secretion; that stretch reads MTPRGPGRLQRLSQCRPQRGSGGPARGLRQLALAAMLGALA. 2 consecutive transmembrane segments (helical) span residues 71-91 and 118-138; these read LWIG…GLIF and LVLT…TVVV. Residues histidine 254, cysteine 295, cysteine 299, and histidine 303 each coordinate Cu cation.

This sequence belongs to the cytochrome c oxidase subunit 2 family. Requires Cu cation as cofactor. Heme is required as a cofactor.

It is found in the cell membrane. The catalysed reaction is 4 Fe(II)-[cytochrome c] + O2 + 8 H(+)(in) = 4 Fe(III)-[cytochrome c] + 2 H2O + 4 H(+)(out). In terms of biological role, subunits I and II form the functional core of the enzyme complex. Electrons originating in cytochrome c are transferred via heme a and Cu(A) to the binuclear center formed by heme a3 and Cu(B). This chain is Cytochrome c oxidase subunit 2 (ctaC), found in Mycobacterium bovis (strain ATCC BAA-935 / AF2122/97).